The following is a 326-amino-acid chain: MAVYTDVAADDLAEFLLAYDIGELLSYKGIAEGVENTNFLLHTSRGSFILTLYEKRVAAEDLPYFLSLMAHLASRGVSCPQPEKNRDGEICGTLSGRPAVIINFLEGVWPRRPNVAQCAGVGEALAKMHLAGRDFPLVRKNPLSVKGWWALFEQAASGADPLQHGLRALLHAELDHLDHAWPKHLPEGVIHADLFPDNVFFIGDKLSGLIDFPFACNDILAYDVAICLNAWCFEPDHSFNVTKARAFLNGYNRGRPLEAAEQDALPLLARGAALRFLLTRLVDSLNVPAGALVRPKDPLEYARKLRFHQSVNSIRDYGVETSGLVA.

This sequence belongs to the pseudomonas-type ThrB family.

It catalyses the reaction L-homoserine + ATP = O-phospho-L-homoserine + ADP + H(+). It participates in amino-acid biosynthesis; L-threonine biosynthesis; L-threonine from L-aspartate: step 4/5. This is Homoserine kinase from Rhodopseudomonas palustris (strain BisA53).